We begin with the raw amino-acid sequence, 290 residues long: ATP synthase gamma chain (290 aa).

Belongs to the ATPase gamma chain family. As to quaternary structure, F-type ATPases have 2 components, CF(1) - the catalytic core - and CF(0) - the membrane proton channel. CF(1) has five subunits: alpha(3), beta(3), gamma(1), delta(1), epsilon(1). CF(0) has three main subunits: a, b and c.

Its subcellular location is the cell membrane. Produces ATP from ADP in the presence of a proton gradient across the membrane. The gamma chain is believed to be important in regulating ATPase activity and the flow of protons through the CF(0) complex. This is ATP synthase gamma chain from Chloroflexus aurantiacus (strain ATCC 29366 / DSM 635 / J-10-fl).